Here is a 504-residue protein sequence, read N- to C-terminus: Maturase K (504 aa).

The protein belongs to the intron maturase 2 family. MatK subfamily.

It is found in the plastid. Its subcellular location is the chloroplast. Functionally, usually encoded in the trnK tRNA gene intron. Probably assists in splicing its own and other chloroplast group II introns. In Quercus coccifera (Kermes oak), this protein is Maturase K.